We begin with the raw amino-acid sequence, 591 residues long: Reduced folate transporter (591 aa).

Position 1 is an N-acetylmethionine (M1). Over 1-29 the chain is Cytoplasmic; that stretch reads MVPSSPAVEKQVPVEPGPDPELRSWRHLV. A Phosphoserine modification is found at S5. The chain crosses the membrane as a helical span at residues 30–50; the sequence is CYLCFYGFMAQIRPGESFITP. Residues I48 and T49 each contribute to the folate site. Topologically, residues 51 to 64 are extracellular; the sequence is YLLGPDKNFTREQV. N-linked (GlcNAc...) asparagine glycosylation is present at N58. Residues 65–87 traverse the membrane as a helical segment; sequence TNEITPVLSYSYLAVLVPVFLLT. Over 88 to 91 the chain is Cytoplasmic; sequence DYLR. Residues 92-112 traverse the membrane as a helical segment; the sequence is YTPVLLLQGLSFVSVWLLLLL. The Extracellular segment spans residues 113 to 116; that stretch reads GHSV. A helical membrane pass occupies residues 117-139; the sequence is AHMQLMELFYSVTMAARIAYSSY. Residues E123 and R133 each contribute to the folate site. 2',3'-cGAMP-binding residues include R133, I134, S137, Y149, and R157. Residues 140 to 153 are Cytoplasmic-facing; that stretch reads IFSLVRPARYQRVA. Residues 154–178 traverse the membrane as a helical segment; sequence GYSRAAVLLGVFTSSVLGQLLVTVG. V164 serves as a coordination point for folate. At 179 to 183 the chain is on the extracellular side; sequence RVSFS. A helical transmembrane segment spans residues 184–202; that stretch reads TLNYISLAFLTFSVVLALF. Over 203-266 the chain is Cytoplasmic; the sequence is LKRPKRSLFF…ELGDSLRRPQ (64 aa). S225 is subject to Phosphoserine. A helical membrane pass occupies residues 267–292; sequence LRLWSLWWVFNSAGYYLVVYYVHILW. Positions 281, 282, and 286 each coordinate folate. Y282 is a binding site for 2',3'-cGAMP. Over 293–304 the chain is Extracellular; sequence NEVDPTTNSARV. Residues 305 to 327 form a helical membrane-spanning segment; that stretch reads YNGAADAASTLLGAITSFAAGFV. S321 lines the 2',3'-cGAMP pocket. Topologically, residues 328–333 are cytoplasmic; sequence KIRWAR. A helical transmembrane segment spans residues 334-354; that stretch reads WSKLLIAGVTATQAGLVFLLA. The Extracellular segment spans residues 355–360; sequence HTRHPS. A helical membrane pass occupies residues 361-384; sequence SIWLCYAAFVLFRGSYQFLVPIAT. The folate site is built by R373 and Q377. The 2',3'-cGAMP site is built by Q377, P381, T384, K393, C396, and F400. Residues 385–398 are Cytoplasmic-facing; that stretch reads FQIASSLSKELCAL. The chain crosses the membrane as a helical span at residues 399 to 422; it reads VFGVNTFFATIVKTIITFIVSDVR. The interval 407 to 419 is required for substrate-binding; the sequence is ATIVKTIITFIVS. At 423–430 the chain is on the extracellular side; that stretch reads GLGLPVRK. Residues 431–455 form a helical membrane-spanning segment; the sequence is QFQLYSVYFLILSIIYFLGAMLDGL. Over 456–591 the chain is Cytoplasmic; the sequence is RHCQRGHHPR…PSDGVQNVNQ (136 aa). Phosphoserine is present on residues S474, S485, S499, and S503.

This sequence belongs to the reduced folate carrier (RFC) transporter (TC 2.A.48) family. As to expression, placenta, liver, and to a much smaller extent, in lung.

The protein localises to the cell membrane. Its subcellular location is the apical cell membrane. It localises to the basolateral cell membrane. It catalyses the reaction 5-amino-1-(5-phospho-beta-D-ribosyl)imidazole-4-carboxamide(in) + (6S)-5-methyl-5,6,7,8-tetrahydrofolate(out) = 5-amino-1-(5-phospho-beta-D-ribosyl)imidazole-4-carboxamide(out) + (6S)-5-methyl-5,6,7,8-tetrahydrofolate(in). It carries out the reaction 2',3'-cGAMP(out) + 5-amino-1-(5-phospho-beta-D-ribosyl)imidazole-4-carboxamide(in) = 2',3'-cGAMP(in) + 5-amino-1-(5-phospho-beta-D-ribosyl)imidazole-4-carboxamide(out). The catalysed reaction is 3',3'-cGAMP(out) + 5-amino-1-(5-phospho-beta-D-ribosyl)imidazole-4-carboxamide(in) = 3',3'-cGAMP(in) + 5-amino-1-(5-phospho-beta-D-ribosyl)imidazole-4-carboxamide(out). In terms of biological role, antiporter that mediates the import of reduced folates or a subset of cyclic dinucleotides, driven by the export of organic anions. Acts as an importer of immunoreactive cyclic dinucleotides, such as cyclic GMP-AMP (2'-3'-cGAMP), an immune messenger produced in response to DNA virus in the cytosol, and its linkage isomer 3'-3'-cGAMP, thus playing a role in triggering larger immune responses. Mechanistically, acts as a secondary active transporter, which exports intracellular organic anions down their concentration gradients to facilitate the uptake of its substrates. Has high affinity for N5-methyltetrahydrofolate, the predominant circulating form of folate. Also mediates the import of antifolate drug methotrexate. 5-amino-4-imidazolecarboxamide riboside (AICAR), when phosphorylated to AICAR monophosphate, can serve as an organic anion for antiporter activity. The polypeptide is Reduced folate transporter (Homo sapiens (Human)).